The following is a 153-amino-acid chain: ORM1-like protein 2 (153 aa).

The Cytoplasmic segment spans residues Met1 to Gly21. The next 2 membrane-spanning stretches (helical) occupy residues Ile22–Phe42 and Phe43–Phe63. Residues Leu64–Ser105 are Cytoplasmic-facing. Residues Pro106–Ile126 form a helical membrane-spanning segment. Topologically, residues Asn127–Tyr153 are extracellular.

It belongs to the ORM family. As to quaternary structure, ceramide-sensitive subunit of the serine palmitoyltransferase (SPT) complex, which is also composed of SPTLC1, SPTLC2/3 and SPTSSA/B.

The protein localises to the endoplasmic reticulum membrane. Plays an essential role in the homeostatic regulation of sphingolipid de novo biosynthesis by modulating the activity of the serine palmitoyltransferase (SPT) in response to ceramide levels. When complexed to SPT, the binding of ceramides to its N-terminus stabilizes a conformation that block SPT substrate entry, hence preventing SPT catalytic activity. Through this mechanism, maintains ceramide levels at sufficient concentrations for the production of complex sphingolipids, but which prevents the accumulation of ceramides to levels that trigger apoptosis. The polypeptide is ORM1-like protein 2 (Ormdl2) (Mus musculus (Mouse)).